Consider the following 463-residue polypeptide: 3-isopropylmalate dehydratase large subunit (463 aa).

[4Fe-4S] cluster is bound by residues cysteine 347, cysteine 407, and cysteine 410.

Belongs to the aconitase/IPM isomerase family. LeuC type 1 subfamily. In terms of assembly, heterodimer of LeuC and LeuD. It depends on [4Fe-4S] cluster as a cofactor.

It carries out the reaction (2R,3S)-3-isopropylmalate = (2S)-2-isopropylmalate. The protein operates within amino-acid biosynthesis; L-leucine biosynthesis; L-leucine from 3-methyl-2-oxobutanoate: step 2/4. Its function is as follows. Catalyzes the isomerization between 2-isopropylmalate and 3-isopropylmalate, via the formation of 2-isopropylmaleate. The protein is 3-isopropylmalate dehydratase large subunit of Buchnera aphidicola subsp. Cinara cedri (strain Cc).